The sequence spans 287 residues: Undecaprenyl-diphosphatase (287 aa).

A run of 8 helical transmembrane segments spans residues 1–21, 49–69, 101–121, 126–146, 160–180, 203–223, 232–252, and 267–287; these read MALW…FLPV, MILF…VVFA, LFLL…TLKA, VFAN…LLFW, TGVG…MPGL, YSFF…AIEV, VSVA…IVSL, and FSFY…DLPI.

The protein belongs to the UppP family.

The protein resides in the cell inner membrane. The enzyme catalyses di-trans,octa-cis-undecaprenyl diphosphate + H2O = di-trans,octa-cis-undecaprenyl phosphate + phosphate + H(+). In terms of biological role, catalyzes the dephosphorylation of undecaprenyl diphosphate (UPP). Confers resistance to bacitracin. This is Undecaprenyl-diphosphatase from Halorhodospira halophila (strain DSM 244 / SL1) (Ectothiorhodospira halophila (strain DSM 244 / SL1)).